We begin with the raw amino-acid sequence, 794 residues long: MQVHVGLTLLLCAVLLSSATASSDDESNQDESIDSKSSLPADESVKDHSTTGRVVAGQIFVDSEDPEVESPLQEEEESSKTEEEVSVGEEISFVESPSLSSKSYEEAKRARKPVLTAIEGTAHGEPCHFPFLFLDKEYDECTSDGRQDGRLWCATTYDYKTDEKWGFCETEEDAAKRRQMQEAEMIYQAGMKILNGSNRKSQKREAYRYLQKAAGMNHTKALERVSYALLFGDYLTQNIQAAKEMFEKLTEEGSPKGQTALGFLYVSGLGVNSSQAKALVYYTFGALGGNLIAHMVLGYRYWAGIGVLQSCESVLTHYRLVANHVASDISLTGGSVVQRIRLPDEVENPGMNSGMLEEDLIQYYQFLAEKGDVQAQVGLGQLHLHGGRGVEQNHQRAFDYFNLAANAGNSHAMAFLGKMYSEGSDIVPQSNETALHYFKKAADMGNPVGQSGLGMAYLYGRGIQVNYDLALKYFQKAAEQGWVDGQLQLGSMYYNGIGVKRDYKQALKYFNLASQGGHILAFYNLAQMHASGTGVMRSCHTAVELFKNVCERGRWSERLMTAYNSYKDGDYNAAVVQYLLLAEQGYEVAQSNAAFILDQREATIVGENETYPRALLHWNRAASQGYTVARIKLGDYHFYGFGTDVDYETAFIHYRLASEQQHSAQAMFNLGYMHEKGLGIKQDIHLAKRFYDMAAEASPDAQVPVFLALCKLGVVYFLQYIREANIRDIFTQLDMDQLLGPEWDLYLMTIIALLLGTVIAYRQRQHQDVPVPRPPGPWPAPPQQEGPPEQQPPQ.

The signal sequence occupies residues 1–21; the sequence is MQVHVGLTLLLCAVLLSSATA. Residues 20 to 91 are disordered; it reads TASSDDESNQ…EEEVSVGEEI (72 aa). Residues 22-737 form an interaction with ERLEC1, OS9 and SYVN1 region; sequence SSDDESNQDE…DIFTQLDMDQ (716 aa). The Lumenal segment spans residues 22–738; that stretch reads SSDDESNQDE…IFTQLDMDQL (717 aa). Acidic residues-rich tracts occupy residues 23–32 and 62–77; these read SDDESNQDES and DSED…EEEE. At Ser63 the chain carries Phosphoserine. Positions 122–170 constitute a Fibronectin type-II domain; that stretch reads AHGEPCHFPFLFLDKEYDECTSDGRQDGRLWCATTYDYKTDEKWGFCET. 2 cysteine pairs are disulfide-bonded: Cys127–Cys153 and Cys141–Cys168. Sel1-like repeat units lie at residues 183–218, 219–254, 255–290, 291–326, 373–409, 410–446, 447–482, 483–518, and 519–554; these read AEMI…GMNH, TKAL…EEGS, PKGQ…LGGN, LIAH…NHVA, VQAQ…NAGN, SHAM…DMGN, PVGQ…EQGW, VDGQ…QGGH, and ILAF…ERGR. N-linked (GlcNAc...) asparagine glycosylation is found at Asn195 and Asn217. A glycan (N-linked (GlcNAc...) asparagine) is linked at Asn272. Residues 352–537 form an important for homodimerization and oligomerization region; it reads NSGMLEEDLI…MHASGTGVMR (186 aa). Asn431 is a glycosylation site (N-linked (GlcNAc...) asparagine). Asn608 carries an N-linked (GlcNAc...) asparagine glycan. Sel1-like repeat units follow at residues 627-662 and 664-699; these read TVAR…EQQH and AQAM…EASP. The interaction with SYVN1 stretch occupies residues 643–723; the sequence is TDVDYETAFI…VVYFLQYIRE (81 aa). Residues 738-794 are mediates retention in the endoplasmic reticulum; it reads LLGPEWDLYLMTIIALLLGTVIAYRQRQHQDVPVPRPPGPWPAPPQQEGPPEQQPPQ. A helical transmembrane segment spans residues 739 to 759; the sequence is LGPEWDLYLMTIIALLLGTVI. At 760-794 the chain is on the cytoplasmic side; the sequence is AYRQRQHQDVPVPRPPGPWPAPPQQEGPPEQQPPQ. The disordered stretch occupies residues 768 to 794; sequence DVPVPRPPGPWPAPPQQEGPPEQQPPQ. Residues 771-794 show a composition bias toward pro residues; that stretch reads VPRPPGPWPAPPQQEGPPEQQPPQ.

Belongs to the sel-1 family. In terms of assembly, homodimer and homooligomer. May form a complex with ERLEC1, HSPA5, OS9, and SYVN1. Interacts with FOXRED2 and EDEM1. Interacts with LPL and LMF1; may stabilize the complex formed by LPL and LMF1 and thereby promote the export of LPL dimers. Component of the HRD1 complex, which comprises at least SYNV1/HRD1, DERL1/2, FAM8A1, HERPUD1/HERP, OS9, SEL1L and UBE2J1. SYNV1 assembles with SEL1L and FAM8A1 through its transmembrane domains, but interaction with its cytoplasmic domain is required to confer stability to FAM8A1 and enhance recruitment of HERPUD1. The interaction with SYNV1/HRD1 is direct. Post-translationally, N-glycosylated.

The protein resides in the endoplasmic reticulum membrane. In terms of biological role, plays a role in the endoplasmic reticulum quality control (ERQC) system also called ER-associated degradation (ERAD) involved in ubiquitin-dependent degradation of misfolded endoplasmic reticulum proteins. Enhances SYVN1 stability. Plays a role in LPL maturation and secretion. Required for normal differentiation of the pancreas epithelium, and for normal exocrine function and survival of pancreatic cells. May play a role in Notch signaling. The polypeptide is Protein sel-1 homolog 1 (Sel1l) (Mesocricetus auratus (Golden hamster)).